Consider the following 369-residue polypeptide: Saccharopine dehydrogenase [NAD(+), L-lysine-forming] (369 aa).

L-saccharopine is bound by residues R19 and K78. K78 functions as the Proton acceptor in the catalytic mechanism. H96 (proton donor) is an active-site residue. Position 101 (Q101) interacts with L-saccharopine. NAD(+) is bound at residue R130. L-saccharopine-binding residues include R131 and F135. NAD(+) is bound by residues 203–204 (GR), D227, T231, Y251, and V278. A disulfide bridge connects residues C205 and C249. 279–281 (SAD) is a binding site for L-saccharopine. 318–321 (IDHL) provides a ligand contact to NAD(+).

This sequence belongs to the AlaDH/PNT family. As to quaternary structure, monomer.

It carries out the reaction L-saccharopine + NAD(+) + H2O = L-lysine + 2-oxoglutarate + NADH + H(+). It functions in the pathway amino-acid biosynthesis; L-lysine biosynthesis via AAA pathway; L-lysine from L-alpha-aminoadipate (fungal route): step 3/3. In terms of biological role, catalyzes the NAD(+)-dependent cleavage of saccharopine to L-lysine and 2-oxoglutarate, the final step in the alpha-aminoadipate (AAA) pathway for lysin biosynthesis. This is Saccharopine dehydrogenase [NAD(+), L-lysine-forming] from Yarrowia lipolytica (strain CLIB 122 / E 150) (Yeast).